Here is a 428-residue protein sequence, read N- to C-terminus: Enolase (428 aa).

Gln-163 is a binding site for (2R)-2-phosphoglycerate. The active-site Proton donor is Glu-205. Positions 242, 285, and 312 each coordinate Mg(2+). (2R)-2-phosphoglycerate contacts are provided by Lys-337, Arg-366, Ser-367, and Lys-388. Lys-337 (proton acceptor) is an active-site residue.

The protein belongs to the enolase family. Requires Mg(2+) as cofactor.

It is found in the cytoplasm. Its subcellular location is the secreted. The protein resides in the cell surface. It carries out the reaction (2R)-2-phosphoglycerate = phosphoenolpyruvate + H2O. It functions in the pathway carbohydrate degradation; glycolysis; pyruvate from D-glyceraldehyde 3-phosphate: step 4/5. In terms of biological role, catalyzes the reversible conversion of 2-phosphoglycerate (2-PG) into phosphoenolpyruvate (PEP). It is essential for the degradation of carbohydrates via glycolysis. The sequence is that of Enolase from Polynucleobacter asymbioticus (strain DSM 18221 / CIP 109841 / QLW-P1DMWA-1) (Polynucleobacter necessarius subsp. asymbioticus).